The primary structure comprises 301 residues: Protoheme IX farnesyltransferase (301 aa).

Transmembrane regions (helical) follow at residues 20 to 42 (FTEL…GMWL), 55 to 75 (VDVI…SGAF), 105 to 125 (ALMV…MTTW), 126 to 146 (QAGV…SLYA), 150 to 172 (LVSN…WFAV), 176 to 198 (FSIV…FYAI), 227 to 247 (MFFW…LGIV), 249 to 269 (VILA…GFKM), and 280 to 300 (FVYS…ISIF).

The protein belongs to the UbiA prenyltransferase family. Protoheme IX farnesyltransferase subfamily. In terms of assembly, interacts with CtaA.

Its subcellular location is the cell membrane. It carries out the reaction heme b + (2E,6E)-farnesyl diphosphate + H2O = Fe(II)-heme o + diphosphate. It functions in the pathway porphyrin-containing compound metabolism; heme O biosynthesis; heme O from protoheme: step 1/1. Functionally, converts heme B (protoheme IX) to heme O by substitution of the vinyl group on carbon 2 of heme B porphyrin ring with a hydroxyethyl farnesyl side group. The chain is Protoheme IX farnesyltransferase from Listeria monocytogenes serovar 1/2a (strain ATCC BAA-679 / EGD-e).